Consider the following 338-residue polypeptide: Tryptophan--tRNA ligase (338 aa).

ATP-binding positions include 12–14 and 20–21; these read QPT and GN. A 'HIGH' region motif is present at residues 13–21; it reads PTGDLHIGN. An L-tryptophan-binding site is contributed by aspartate 136. ATP is bound by residues 148–150, isoleucine 191, and 200–204; these read GED and KMSKS. Positions 200 to 204 match the 'KMSKS' region motif; it reads KMSKS.

It belongs to the class-I aminoacyl-tRNA synthetase family. Homodimer.

It is found in the cytoplasm. The enzyme catalyses tRNA(Trp) + L-tryptophan + ATP = L-tryptophyl-tRNA(Trp) + AMP + diphosphate + H(+). In terms of biological role, catalyzes the attachment of tryptophan to tRNA(Trp). The sequence is that of Tryptophan--tRNA ligase from Prochlorococcus marinus subsp. pastoris (strain CCMP1986 / NIES-2087 / MED4).